A 735-amino-acid polypeptide reads, in one-letter code: Catalase-peroxidase (735 aa).

Residues 1 to 31 (MENNTNPISGQGKCPFSGGAAKQSAGAGTRN) are disordered. Low complexity predominate over residues 17–28 (SGGAAKQSAGAG). The tryptophyl-tyrosyl-methioninium (Trp-Tyr) (with M-252) cross-link spans 103–226 (WHSAGTYRVA…LAAVQMGLIY (124 aa)). H104 (proton acceptor) is an active-site residue. The segment at residues 226 to 252 (YVNPEGPNGNPDPLASARDIRETFARM) is a cross-link (tryptophyl-tyrosyl-methioninium (Tyr-Met) (with W-103)). H267 contacts heme b. The disordered stretch occupies residues 352-371 (KPKNGAGAGTVPDAHNSSKS).

This sequence belongs to the peroxidase family. Peroxidase/catalase subfamily. In terms of assembly, homodimer or homotetramer. Heme b serves as cofactor. Formation of the three residue Trp-Tyr-Met cross-link is important for the catalase, but not the peroxidase activity of the enzyme.

The catalysed reaction is H2O2 + AH2 = A + 2 H2O. It carries out the reaction 2 H2O2 = O2 + 2 H2O. In terms of biological role, bifunctional enzyme with both catalase and broad-spectrum peroxidase activity. This chain is Catalase-peroxidase, found in Flavobacterium psychrophilum (strain ATCC 49511 / DSM 21280 / CIP 103535 / JIP02/86).